Reading from the N-terminus, the 222-residue chain is 3-dehydroquinate dehydratase (222 aa).

Residues 29–31 (ELR) and Arg-55 contribute to the 3-dehydroquinate site. His-112 (proton donor/acceptor) is an active-site residue. Catalysis depends on Lys-139, which acts as the Schiff-base intermediate with substrate. Residues Arg-178, Ser-199, and Gln-203 each coordinate 3-dehydroquinate.

This sequence belongs to the type-I 3-dehydroquinase family. As to quaternary structure, homodimer.

It carries out the reaction 3-dehydroquinate = 3-dehydroshikimate + H2O. Its pathway is metabolic intermediate biosynthesis; chorismate biosynthesis; chorismate from D-erythrose 4-phosphate and phosphoenolpyruvate: step 3/7. Involved in the third step of the chorismate pathway, which leads to the biosynthesis of aromatic amino acids. Catalyzes the cis-dehydration of 3-dehydroquinate (DHQ) and introduces the first double bond of the aromatic ring to yield 3-dehydroshikimate. The protein is 3-dehydroquinate dehydratase of Dehalococcoides mccartyi (strain ATCC BAA-2100 / JCM 16839 / KCTC 5957 / BAV1).